The primary structure comprises 1310 residues: Contactin-associated protein-like 4 (1310 aa).

The signal sequence occupies residues 1–27 (MNMGSVAGAVLKMLLLLSTQNWNRVEA). The Extracellular portion of the chain corresponds to 28–1243 (GNSYDCDEPL…LTHAIKSDSA (1216 aa)). An F5/8 type C domain is found at 33–179 (CDEPLVSALP…IGMRIEVFGC (147 aa)). An intrachain disulfide couples Cys33 to Cys179. The 133-residue stretch at 214–346 (FKTMESDGIL…NLFYNGVDVI (133 aa)) folds into the Laminin G-like 1 domain. N-linked (GlcNAc...) asparagine glycosylation is found at Asn262, Asn287, and Asn361. Disulfide bonds link Cys334–Cys366, Cys517–Cys549, Cys555–Cys566, and Cys560–Cys575. Positions 400–529 (FRTWNKAGLL…LISINNKMVD (130 aa)) constitute a Laminin G-like 2 domain. N-linked (GlcNAc...) asparagine glycosylation is present at Asn540. The EGF-like 1 domain maps to 551–588 (ISDRCLPNSCEHGGECSQSWSTFHCNCTNTGYTGATCH). Asn576 carries an N-linked (GlcNAc...) asparagine glycan. Cys577 and Cys587 form a disulfide bridge. In terms of domain architecture, Fibrinogen C-terminal spans 589–794 (SSVYEQSCEA…LLCRGDRPFW (206 aa)). Asn604, Asn627, Asn639, Asn708, and Asn750 each carry an N-linked (GlcNAc...) asparagine glycan. The region spanning 795–960 (NAASFNTEAS…TVTPGVQPGC (166 aa)) is the Laminin G-like 3 domain. 4 cysteine pairs are disulfide-bonded: Cys933-Cys960, Cys964-Cys977, Cys971-Cys986, and Cys988-Cys998. Residues 960-999 (CRGHCGSYGKLCRHGGKCREKPSGFFCDCSSSAYAGPFCS) enclose the EGF-like 2 domain. Residues Asn1019, Asn1025, and Asn1075 are each glycosylated (N-linked (GlcNAc...) asparagine). The 157-residue stretch at 1048 to 1204 (FRTTRAPSLL…VTGHVTESSC (157 aa)) folds into the Laminin G-like 4 domain. A disulfide bond links Cys1169 and Cys1204. A helical membrane pass occupies residues 1244 to 1264 (VIGGLIAVVIFILLCVSAIAV). The Cytoplasmic segment spans residues 1265–1310 (RIYQQKRLYKRNEAKRSENVDSAEAVLKSELHIQNAVGENQKEYFF).

Belongs to the neurexin family. As to quaternary structure, interacts with TIAM1. In terms of tissue distribution, specifically present in developing cortical interneurons: highly expressed in cortical parvalbumin (PV) cells and midbrain dopaminergic neurons and is localized presynaptically (at protein level). Also present in the substantia nigra pars compacta (SnC) and ventral tegmental area (VTA) midbrain dopaminergic projection populations.

The protein resides in the presynaptic cell membrane. Presynaptic protein involved in both dopaminergic synaptic transmission and GABAergic system, thereby participating in the structural maturation of inhibitory interneuron synapses. Involved in the dopaminergic synaptic transmission by attenuating dopamine release through a presynaptic mechanism. Also participates in the GABAergic system. This Mus musculus (Mouse) protein is Contactin-associated protein-like 4 (Cntnap4).